A 1345-amino-acid chain; its full sequence is DNA-directed RNA polymerase subunit beta' (1345 aa).

Zn(2+)-binding residues include cysteine 60, cysteine 62, cysteine 75, and cysteine 78. Positions 536, 538, and 540 each coordinate Mg(2+). Residues cysteine 895, cysteine 974, cysteine 981, and cysteine 984 each coordinate Zn(2+).

Belongs to the RNA polymerase beta' chain family. In terms of assembly, the RNAP catalytic core consists of 2 alpha, 1 beta, 1 beta' and 1 omega subunit. When a sigma factor is associated with the core the holoenzyme is formed, which can initiate transcription. The cofactor is Mg(2+). It depends on Zn(2+) as a cofactor.

The catalysed reaction is RNA(n) + a ribonucleoside 5'-triphosphate = RNA(n+1) + diphosphate. Functionally, DNA-dependent RNA polymerase catalyzes the transcription of DNA into RNA using the four ribonucleoside triphosphates as substrates. The chain is DNA-directed RNA polymerase subunit beta' from Bifidobacterium longum (strain DJO10A).